Consider the following 466-residue polypeptide: Alpha-1A adrenergic receptor (466 aa).

Topologically, residues 1–25 are extracellular; sequence MVFLSGNASDSSNCTHPPAPVNISK. N-linked (GlcNAc...) asparagine glycosylation is found at asparagine 7, asparagine 13, and asparagine 22. The helical transmembrane segment at 26–51 threads the bilayer; it reads AILLGVILGGLILFGVLGNILVILSV. Topologically, residues 52 to 63 are cytoplasmic; sequence ACHRHLHSVTHY. Residues 64-89 form a helical membrane-spanning segment; it reads YIVNLAVADLLLTSTVLPFSAIFEIL. The Extracellular portion of the chain corresponds to 90–99; it reads GYWAFGRVFC. Residues 100 to 122 form a helical membrane-spanning segment; sequence NIWAAVDVLCCTASIISLCVISI. The Cytoplasmic portion of the chain corresponds to 123 to 143; the sequence is DRYIGVSYPLRYPTIVTQRRG. Residues 144 to 168 traverse the membrane as a helical segment; sequence LRALLCVWAFSLVISVGPLFGWRQP. Residues 169–181 lie on the Extracellular side of the membrane; that stretch reads APDDETICQINEE. The helical transmembrane segment at 182–205 threads the bilayer; that stretch reads PGYVLFSALGSFYVPLTIILAMYC. Residues 206–272 are Cytoplasmic-facing; sequence RVYVVAKRES…KFSREKKAAK (67 aa). A helical transmembrane segment spans residues 273 to 297; that stretch reads TLGIVVGCFVLCWLPFFLVMPIGSF. The Extracellular portion of the chain corresponds to 298–304; the sequence is FPDFKPP. A helical membrane pass occupies residues 305-329; it reads ETVFKIVFWLGYLNSCINPIIYPCS. The Cytoplasmic portion of the chain corresponds to 330 to 466; the sequence is SQEFKKAFQN…ISLSENGEEV (137 aa). A Nuclear localization signal motif is present at residues 334–349; sequence KKAFQNVLKIQCLRRK. The S-palmitoyl cysteine moiety is linked to residue cysteine 345.

This sequence belongs to the G-protein coupled receptor 1 family. Adrenergic receptor subfamily. ADRA1A sub-subfamily. As to quaternary structure, homo- and heterooligomer. Heterooligomerizes with ADRA1B homooligomers in cardiac myocytes. Interacts with CAVIN4. In terms of tissue distribution, abundant in liver, vas deferens, brain, and aorta, but not in heart.

The protein resides in the nucleus membrane. It is found in the cell membrane. The protein localises to the cytoplasm. It localises to the membrane. Its subcellular location is the caveola. In terms of biological role, this alpha-adrenergic receptor mediates its action by association with G proteins that activate a phosphatidylinositol-calcium second messenger system. Its effect is mediated by G(q) and G(11) proteins. Nuclear ADRA1A-ADRA1B heterooligomers regulate phenylephrine (PE)-stimulated ERK signaling in cardiac myocytes. This chain is Alpha-1A adrenergic receptor (ADRA1A), found in Oryctolagus cuniculus (Rabbit).